Reading from the N-terminus, the 139-residue chain is D-ribose pyranase (139 aa).

His-20 serves as the catalytic Proton donor. Residues Asp-28, His-106, and Tyr-128–Asn-130 each bind substrate.

It belongs to the RbsD / FucU family. RbsD subfamily. As to quaternary structure, homodecamer.

The protein resides in the cytoplasm. The catalysed reaction is beta-D-ribopyranose = beta-D-ribofuranose. Its pathway is carbohydrate metabolism; D-ribose degradation; D-ribose 5-phosphate from beta-D-ribopyranose: step 1/2. Functionally, catalyzes the interconversion of beta-pyran and beta-furan forms of D-ribose. This is D-ribose pyranase from Aliivibrio fischeri (strain MJ11) (Vibrio fischeri).